Here is a 279-residue protein sequence, read N- to C-terminus: Tumor necrosis factor ligand superfamily member 6 (279 aa).

Over 1 to 78 (MQQPMNYPCP…PLKKKDHNTN (78 aa)) the chain is Cytoplasmic. The interval 30-70 (FPCPSCGPRGPDQRRPPPPPPPVSPLPPPSQPLPLPPLTPL) is disordered. Pro residues predominate over residues 45 to 68 (PPPPPPPVSPLPPPSQPLPLPPLT). A helical; Signal-anchor for type II membrane protein membrane pass occupies residues 79–100 (LWLPVVFFMVLVALVGMGLGMY). Residues 101-279 (QLFHLQKELA…SKTFFGLYKL (179 aa)) lie on the Extracellular side of the membrane. N117 is a glycosylation site (N-linked (GlcNAc...) asparagine). Residues 126-135 (EKQIANPSTP) are compositionally biased toward polar residues. Residues 126–150 (EKQIANPSTPSEKKEPRSVAHLTGN) form a disordered region. The THD domain maps to 143–279 (SVAHLTGNPH…SKTFFGLYKL (137 aa)). Residue N182 is glycosylated (N-linked (GlcNAc...) asparagine). C200 and C231 form a disulfide bridge. N-linked (GlcNAc...) asparagine glycosylation is found at N248 and N258.

Belongs to the tumor necrosis factor family. As to quaternary structure, homotrimer. Interacts with ARHGAP9, BAIAP2L1, BTK, CACNB3, CACNB4, CRK, DLG2, DNMBP, DOCK4, EPS8L3, FGR, FYB1, FYN, HCK, ITK, ITSN2, KALRN, LYN, MACC1, MIA, MPP4, MYO15A, NCF1, NCK1, NCK2, NCKIPSD, OSTF1, PIK3R1, PSTPIP1, RIMBP3C, SAMSN1, SH3GL3, SH3PXD2B, SH3PXD2A, SH3RF2, SKAP2, SNX33, SNX9, SORBS3, SPTA1, SRC, SRGAP1, SRGAP2, SRGAP3, TEC, TJP3 and YES1. The soluble form derives from the membrane form by proteolytic processing. The membrane-bound form undergoes two successive intramembrane proteolytic cleavages. The first one is processed by ADAM10 producing an N-terminal fragment, which lacks the receptor-binding extracellular domain. This ADAM10-processed FasL (FAsL APL) remnant form is still membrane anchored and further processed by SPPL2A that liberates the FasL intracellular domain (FasL ICD). FasL shedding by ADAM10 is a prerequisite for subsequent intramembrane cleavage by SPPL2A in T-cells. Post-translationally, phosphorylated by FGR on tyrosine residues; this is required for ubiquitination and subsequent internalization. In terms of processing, N-glycosylated. Glycosylation enhances apoptotic activity. Monoubiquitinated. Expressed in T-cells. Expressed in natural killer cells.

The protein resides in the cell membrane. Its subcellular location is the cytoplasmic vesicle lumen. It is found in the lysosome lumen. The protein localises to the secreted. It localises to the nucleus. Its function is as follows. Cytokine that binds to TNFRSF6/FAS, a receptor that transduces the apoptotic signal into cells. Involved in cytotoxic T-cell-mediated apoptosis, natural killer cell-mediated apoptosis and in T-cell development. Initiates fratricidal/suicidal activation-induced cell death (AICD) in antigen-activated T-cells contributing to the termination of immune responses. TNFRSF6/FAS-mediated apoptosis also has a role in the induction of peripheral tolerance. Binds to TNFRSF6B/DcR3, a decoy receptor that blocks apoptosis. In terms of biological role, induces FAS-mediated activation of NF-kappa-B, initiating non-apoptotic signaling pathways. Can induce apoptosis but does not appear to be essential for this process. Cytoplasmic form induces gene transcription inhibition. This chain is Tumor necrosis factor ligand superfamily member 6 (Faslg), found in Mus musculus (Mouse).